A 184-amino-acid chain; its full sequence is Photosystem I assembly protein Ycf4 (184 aa).

Helical transmembrane passes span 22–42 and 57–77; these read FCWA…GTSS and IVFF…LFIS.

This sequence belongs to the Ycf4 family.

The protein resides in the plastid. Its subcellular location is the chloroplast thylakoid membrane. Functionally, seems to be required for the assembly of the photosystem I complex. In Helianthus annuus (Common sunflower), this protein is Photosystem I assembly protein Ycf4.